Reading from the N-terminus, the 270-residue chain is Small ribosomal subunit protein bS1m (270 aa).

A disordered region spans residues 218–250; that stretch reads TKQGFKHLGPKPLAYTEKKRETTKQSTKNNVFQ.

The protein belongs to the bacterial ribosomal protein bS1 family.

Its subcellular location is the mitochondrion. The chain is Small ribosomal subunit protein bS1m (RPS1) from Marchantia polymorpha (Common liverwort).